Here is a 501-residue protein sequence, read N- to C-terminus: L-arabinose isomerase (501 aa).

4 residues coordinate Mn(2+): E306, E333, H350, and H449.

The protein belongs to the arabinose isomerase family. Mn(2+) serves as cofactor.

It carries out the reaction beta-L-arabinopyranose = L-ribulose. It participates in carbohydrate degradation; L-arabinose degradation via L-ribulose; D-xylulose 5-phosphate from L-arabinose (bacterial route): step 1/3. Its function is as follows. Catalyzes the conversion of L-arabinose to L-ribulose. The sequence is that of L-arabinose isomerase from Mycolicibacterium smegmatis (strain ATCC 700084 / mc(2)155) (Mycobacterium smegmatis).